Here is a 498-residue protein sequence, read N- to C-terminus: MASQGTKRSYEQMETGGERQNATEIRASVGRMVGGIGRFYIQMCTELKLSDYEGRLIQNSITIERMVLSAFDERRNKYLEEHPSAGKDPKKTGGPIYRRRDGKWMRELILYDKEEIRRIWRQANNGEDATAGLTHLMIWHSNLNDATYQRTRALVRTGMDPRMCSLMQGSTLPRRSGAAGAAVKGVGTMVMELIRMIKRGINDRNFWRGENGRRTRIAYERMCNILKGKFQTAAQRAMMDQVRESRNPGNAEIEDLIFLARSALILRGSVAHKSCLPACVYGLSVASGYDFEREGYSLVGIDPFRLLQNSQVFSLIRPNENPAHKSQLVWMACHSAAFEDLRVSSFIRGARVVPRGQLSTRGVQIASNENMETMDSSTLELRSRYWAIRTRSGGNTNQQRASAGQISVQPTFSVQRNLPFERATIMAAFTGNTEGRTSDMRTEIIRMMENARPEDVSFQGRGVFELSDEKATNPIVPSFDMNNEGSYFFGDNAEEYNN.

A Unconventional nuclear localization signal motif is present at residues 1–18 (MASQGTKRSYEQMETGGE). Positions 1 to 21 (MASQGTKRSYEQMETGGERQN) are disordered. Residues 198–216 (KRGINDRNFWRGENGRRTR) carry the Bipartite nuclear localization signal motif.

Belongs to the influenza viruses nucleoprotein family. Homomultimerizes to form the nucleocapsid. May bind host exportin-1/XPO1. Binds to viral genomic RNA. Protein-RNA contacts are mediated by a combination of electrostatic interactions between positively charged residues and the phosphate backbone and planar interactions between aromatic side chains and bases. Post-translationally, late in virus-infected cells, may be cleaved from a 56-kDa protein to a 53-kDa protein by a cellular caspase. This cleavage might be a marker for the onset of apoptosis in infected cells or have a specific function in virus host interaction.

Its subcellular location is the virion. The protein localises to the host nucleus. Functionally, encapsidates the negative strand viral RNA, protecting it from nucleases. The encapsidated genomic RNA is termed the ribonucleoprotein (RNP) and serves as template for transcription and replication. The RNP needs to be localized in the host nucleus to start an infectious cycle, but is too large to diffuse through the nuclear pore complex. NP comprises at least 2 nuclear localization signals that are responsible for the active RNP import into the nucleus through cellular importin alpha/beta pathway. Later in the infection, nclear export of RNPs are mediated through viral proteins NEP interacting with M1 which binds nucleoproteins. It is possible that nucleoprotein binds directly host exportin-1/XPO1 and plays an active role in RNPs nuclear export. M1 interaction with RNP seems to hide nucleoprotein's nuclear localization signals. Soon after a virion infects a new cell, M1 dissociates from the RNP under acidification of the virion driven by M2 protein. Dissociation of M1 from RNP unmasks nucleoprotein's nuclear localization signals, targeting the RNP to the nucleus. The sequence is that of Nucleoprotein from Influenza A virus (strain A/Seal/Massachusetts/1/1980 H7N7).